Consider the following 111-residue polypeptide: Ig kappa chain V-III region PC 2413 (111 aa).

The framework-1 stretch occupies residues 1 to 23; it reads DIVLTQSPASLAVSLGQRATISC. Residues Cys-23 and Cys-92 are joined by a disulfide bond. Positions 24–38 are complementarity-determining-1; the sequence is RASESVVNYGVSLMH. Residues 39–53 form a framework-2 region; sequence WFQQKPGQPPKLLIY. Residues 54-60 form a complementarity-determining-2 region; that stretch reads GASNRGS. The tract at residues 61–92 is framework-3; sequence GVPARFSGSGSGTDFSLIIHPMEEDDSAMYFC. Positions 93 to 101 are complementarity-determining-3; sequence HQTKEVPWT. A framework-4 region spans residues 102-111; that stretch reads FGGGTDLEIE.

This chain is Ig kappa chain V-III region PC 2413, found in Mus musculus (Mouse).